The sequence spans 434 residues: Histidinol dehydrogenase (434 aa).

Residues tyrosine 130, glutamine 188, and asparagine 211 each contribute to the NAD(+) site. Serine 237, glutamine 259, and histidine 262 together coordinate substrate. Positions 259 and 262 each coordinate Zn(2+). Active-site proton acceptor residues include glutamate 326 and histidine 327. Histidine 327, aspartate 360, glutamate 414, and histidine 419 together coordinate substrate. Aspartate 360 contacts Zn(2+). Residue histidine 419 participates in Zn(2+) binding.

Belongs to the histidinol dehydrogenase family. As to quaternary structure, homodimer. Requires Zn(2+) as cofactor. The cofactor is Mn(2+).

It catalyses the reaction L-histidinol + 2 NAD(+) + H2O = L-histidine + 2 NADH + 3 H(+). The protein operates within amino-acid biosynthesis; L-histidine biosynthesis; L-histidine from 5-phospho-alpha-D-ribose 1-diphosphate: step 9/9. Its activity is regulated as follows. Activity is lost when the metal is removed through urea denaturation or chelation, and can be regained by addition of metal. Its function is as follows. Catalyzes the sequential NAD-dependent oxidations of L-histidinol to L-histidinaldehyde and then to L-histidine. The protein is Histidinol dehydrogenase (hisD) of Salmonella typhimurium (strain LT2 / SGSC1412 / ATCC 700720).